Here is a 490-residue protein sequence, read N- to C-terminus: Probable cytosol aminopeptidase (490 aa).

2 residues coordinate Mn(2+): K258 and D263. Residue K270 is part of the active site. 3 residues coordinate Mn(2+): D282, D341, and E343. R345 is an active-site residue.

This sequence belongs to the peptidase M17 family. Requires Mn(2+) as cofactor.

It is found in the cytoplasm. It catalyses the reaction Release of an N-terminal amino acid, Xaa-|-Yaa-, in which Xaa is preferably Leu, but may be other amino acids including Pro although not Arg or Lys, and Yaa may be Pro. Amino acid amides and methyl esters are also readily hydrolyzed, but rates on arylamides are exceedingly low.. It carries out the reaction Release of an N-terminal amino acid, preferentially leucine, but not glutamic or aspartic acids.. Functionally, presumably involved in the processing and regular turnover of intracellular proteins. Catalyzes the removal of unsubstituted N-terminal amino acids from various peptides. This is Probable cytosol aminopeptidase from Microcystis aeruginosa (strain NIES-843 / IAM M-2473).